We begin with the raw amino-acid sequence, 161 residues long: 2-C-methyl-D-erythritol 2,4-cyclodiphosphate synthase (161 aa).

Positions 10 and 12 each coordinate a divalent metal cation. Residues 10–12 (DVH) and 36–37 (HS) each bind 4-CDP-2-C-methyl-D-erythritol 2-phosphate. H44 lines the a divalent metal cation pocket. 4-CDP-2-C-methyl-D-erythritol 2-phosphate-binding positions include 58 to 60 (DIG), 63 to 67 (FPDTD), 134 to 137 (TTTE), F141, and R144.

This sequence belongs to the IspF family. As to quaternary structure, homotrimer. Requires a divalent metal cation as cofactor.

It catalyses the reaction 4-CDP-2-C-methyl-D-erythritol 2-phosphate = 2-C-methyl-D-erythritol 2,4-cyclic diphosphate + CMP. Its pathway is isoprenoid biosynthesis; isopentenyl diphosphate biosynthesis via DXP pathway; isopentenyl diphosphate from 1-deoxy-D-xylulose 5-phosphate: step 4/6. In terms of biological role, involved in the biosynthesis of isopentenyl diphosphate (IPP) and dimethylallyl diphosphate (DMAPP), two major building blocks of isoprenoid compounds. Catalyzes the conversion of 4-diphosphocytidyl-2-C-methyl-D-erythritol 2-phosphate (CDP-ME2P) to 2-C-methyl-D-erythritol 2,4-cyclodiphosphate (ME-CPP) with a corresponding release of cytidine 5-monophosphate (CMP). This chain is 2-C-methyl-D-erythritol 2,4-cyclodiphosphate synthase, found in Shewanella putrefaciens (strain CN-32 / ATCC BAA-453).